The chain runs to 411 residues: Class E basic helix-loop-helix protein 40 (411 aa).

The tract at residues 1 to 21 is disordered; sequence MERIPSAQPPPTCLPKTPGLE. An essential for interaction with BMAL1, E-box binding and repressor activity against the CLOCK-BMAL1 heterodimer region spans residues 1–139; that stretch reads MERIPSAQPP…LSGKNIEAGQ (139 aa). Residues 52 to 107 form the bHLH domain; it reads TYKLPHRLIEKKRRDRINECIAQLKDLLPEHLKLTTLGHLEKAVVLELTLKHVKAL. Positions 75–79 are necessary for interaction with RXRA and repressor activity against RXRA; sequence LKDLL. Positions 142-175 constitute an Orange domain; it reads FCSGFQTCAREVLQYLAKHENTRDLKSSQLVTHL. Residue K159 forms a Glycyl lysine isopeptide (Lys-Gly) (interchain with G-Cter in SUMO1, SUMO2 and SUMO3) linkage. K167 is covalently cross-linked (Glycyl lysine isopeptide (Lys-Gly) (interchain with G-Cter in SUMO2)). The interval 186-293 is disordered; sequence SASRKPLDSA…EPPTKKSRMQ (108 aa). The residue at position 235 (S235) is a Phosphoserine. Basic and acidic residues predominate over residues 248-271; sequence ELEKGDLRSEQPYFKSDHGRRFTV. Residue K279 forms a Glycyl lysine isopeptide (Lys-Gly) (interchain with G-Cter in SUMO1); alternate linkage. A Glycyl lysine isopeptide (Lys-Gly) (interchain with G-Cter in SUMO1, SUMO2 and SUMO3); alternate cross-link involves residue K279. A Glycyl lysine isopeptide (Lys-Gly) (interchain with G-Cter in SUMO2); alternate cross-link involves residue K279. K288 participates in a covalent cross-link: Glycyl lysine isopeptide (Lys-Gly) (interchain with G-Cter in SUMO2). At S383 the chain carries Phosphoserine.

As to quaternary structure, homodimer. Heterodimer with BHLHE41/DEC2. Interacts with TCF3/E47. Interacts with ubiquitin-conjugating enzyme UBE2I/UBC9. Interacts with HDAC1, SUMO1, RXRA and BMAL1. Ubiquitinated; which may lead to proteasomal degradation. In terms of processing, sumoylation inhibits its ubiquitination and promotes its negative regulation of the CLOCK-BMAL1 heterodimer transcriptional activator activity. In terms of tissue distribution, expressed in heart, spleen, lung, liver, muscle, kidney, uterus and gut. Highly expressed in the cerebral cortex, especially in the fifth layer, thalamus, superior colliculus, olfactory bulb, piriform cortex, hippocampus and hypothalamic nuclei.

It localises to the cytoplasm. It is found in the nucleus. Transcriptional repressor involved in the regulation of the circadian rhythm by negatively regulating the activity of the clock genes and clock-controlled genes. Acts as the negative limb of a novel autoregulatory feedback loop (DEC loop) which differs from the one formed by the PER and CRY transcriptional repressors (PER/CRY loop). Both these loops are interlocked as it represses the expression of PER1/2 and in turn is repressed by PER1/2 and CRY1/2. Represses the activity of the circadian transcriptional activator: CLOCK-BMAL1|BMAL2 heterodimer by competing for the binding to E-box elements (5'-CACGTG-3') found within the promoters of its target genes. Negatively regulates its own expression and the expression of DBP and BHLHE41/DEC2. Acts as a corepressor of RXR and the RXR-LXR heterodimers and represses the ligand-induced RXRA and NR1H3/LXRA transactivation activity. May be involved in the regulation of chondrocyte differentiation via the cAMP pathway. Represses the transcription of NR0B2 and attentuates the transactivation of NR0B2 by the CLOCK-BMAL1 complex. Drives the circadian rhythm of blood pressure through transcriptional repression of ATP1B1 in the cardiovascular system. The sequence is that of Class E basic helix-loop-helix protein 40 (Bhlhe40) from Rattus norvegicus (Rat).